A 308-amino-acid polypeptide reads, in one-letter code: uncharacterized protein (308 aa).

A run of 10 helical transmembrane segments spans residues 45–65 (LGLA…KIAL), 69–89 (SPFA…LPFL), 100–120 (IGIA…YTTA), 122–142 (NAGF…WLVY), 151–171 (VSGV…SGFN), 172–192 (IGDI…AMIS), 201–221 (TMLA…FAVF), 226–246 (FEIN…ATFV), 263–283 (AAVI…AVLA), and 285–305 (ILTP…IIVS). EamA domains lie at 52–166 (LIWG…FLSG) and 178–306 (LFCA…IVSL).

The protein belongs to the EamA transporter family.

It localises to the cell membrane. This is an uncharacterized protein from Archaeoglobus fulgidus (strain ATCC 49558 / DSM 4304 / JCM 9628 / NBRC 100126 / VC-16).